We begin with the raw amino-acid sequence, 876 residues long: Alanine--tRNA ligase (876 aa).

Positions 564, 568, 666, and 670 each coordinate Zn(2+).

Belongs to the class-II aminoacyl-tRNA synthetase family. As to quaternary structure, homotetramer. Requires Zn(2+) as cofactor.

The protein resides in the cytoplasm. It catalyses the reaction tRNA(Ala) + L-alanine + ATP = L-alanyl-tRNA(Ala) + AMP + diphosphate. Catalyzes the attachment of alanine to tRNA(Ala) in a two-step reaction: alanine is first activated by ATP to form Ala-AMP and then transferred to the acceptor end of tRNA(Ala). Also edits incorrectly charged Ser-tRNA(Ala) and Gly-tRNA(Ala) via its editing domain. This chain is Alanine--tRNA ligase, found in Salmonella paratyphi A (strain ATCC 9150 / SARB42).